The sequence spans 121 residues: Holo-[acyl-carrier-protein] synthase (121 aa).

Mg(2+)-binding residues include D6 and E55.

Belongs to the P-Pant transferase superfamily. AcpS family. Mg(2+) serves as cofactor.

Its subcellular location is the cytoplasm. The enzyme catalyses apo-[ACP] + CoA = holo-[ACP] + adenosine 3',5'-bisphosphate + H(+). In terms of biological role, transfers the 4'-phosphopantetheine moiety from coenzyme A to a Ser of acyl-carrier-protein. The polypeptide is Holo-[acyl-carrier-protein] synthase (Chloroherpeton thalassium (strain ATCC 35110 / GB-78)).